The following is a 155-amino-acid chain: Small ribosomal subunit protein bS6 (155 aa).

The segment at 94 to 155 (EKHEEGPSAM…RPRRPREDRV (62 aa)) is disordered.

It belongs to the bacterial ribosomal protein bS6 family.

Binds together with bS18 to 16S ribosomal RNA. This is Small ribosomal subunit protein bS6 from Rhizobium leguminosarum bv. trifolii (strain WSM2304).